The sequence spans 267 residues: uncharacterized protein (267 aa).

This sequence belongs to the lin-8 family.

This is an uncharacterized protein from Caenorhabditis elegans.